Here is a 61-residue protein sequence, read N- to C-terminus: Large ribosomal subunit protein uL30 (61 aa).

The protein belongs to the universal ribosomal protein uL30 family. As to quaternary structure, part of the 50S ribosomal subunit.

In Exiguobacterium sibiricum (strain DSM 17290 / CCUG 55495 / CIP 109462 / JCM 13490 / 255-15), this protein is Large ribosomal subunit protein uL30.